Consider the following 236-residue polypeptide: LexA repressor (236 aa).

The disordered stretch occupies residues Met1–Ser25. The segment at residues Ile51 to Arg71 is a DNA-binding region (H-T-H motif). Catalysis depends on for autocatalytic cleavage activity residues Ser160 and Lys197.

Belongs to the peptidase S24 family. Homodimer.

It carries out the reaction Hydrolysis of Ala-|-Gly bond in repressor LexA.. Functionally, represses a number of genes involved in the response to DNA damage (SOS response), including recA and lexA. In the presence of single-stranded DNA, RecA interacts with LexA causing an autocatalytic cleavage which disrupts the DNA-binding part of LexA, leading to derepression of the SOS regulon and eventually DNA repair. This is LexA repressor from Mycobacterium tuberculosis (strain ATCC 25177 / H37Ra).